A 216-amino-acid polypeptide reads, in one-letter code: Imidazole glycerol phosphate synthase subunit HisH (216 aa).

Positions R2 to P216 constitute a Glutamine amidotransferase type-1 domain. The active-site Nucleophile is C88. Residues H196 and E198 contribute to the active site.

Heterodimer of HisH and HisF.

The protein localises to the cytoplasm. The catalysed reaction is 5-[(5-phospho-1-deoxy-D-ribulos-1-ylimino)methylamino]-1-(5-phospho-beta-D-ribosyl)imidazole-4-carboxamide + L-glutamine = D-erythro-1-(imidazol-4-yl)glycerol 3-phosphate + 5-amino-1-(5-phospho-beta-D-ribosyl)imidazole-4-carboxamide + L-glutamate + H(+). It carries out the reaction L-glutamine + H2O = L-glutamate + NH4(+). It participates in amino-acid biosynthesis; L-histidine biosynthesis; L-histidine from 5-phospho-alpha-D-ribose 1-diphosphate: step 5/9. In terms of biological role, IGPS catalyzes the conversion of PRFAR and glutamine to IGP, AICAR and glutamate. The HisH subunit catalyzes the hydrolysis of glutamine to glutamate and ammonia as part of the synthesis of IGP and AICAR. The resulting ammonia molecule is channeled to the active site of HisF. This is Imidazole glycerol phosphate synthase subunit HisH from Rhizobium meliloti (strain 1021) (Ensifer meliloti).